Here is a 142-residue protein sequence, read N- to C-terminus: Clock-controlled protein 6 (142 aa).

This sequence belongs to the SED1 family.

The sequence is that of Clock-controlled protein 6 (ccg-6) from Neurospora crassa (strain ATCC 24698 / 74-OR23-1A / CBS 708.71 / DSM 1257 / FGSC 987).